Here is a 499-residue protein sequence, read N- to C-terminus: GTPase Der (499 aa).

EngA-type G domains follow at residues 3–166 (PVVA…MDEV) and 211–384 (IKLA…DCST). Residues 9–16 (GRPNVGKS), 56–60 (DTGGI), 118–121 (NKTD), 217–224 (GRPNVGKS), 264–268 (DTAGV), and 329–332 (NKWD) contribute to the GTP site. Residues 385 to 469 (RRVNTSMLTR…PIRIQFKEGD (85 aa)) form the KH-like domain.

This sequence belongs to the TRAFAC class TrmE-Era-EngA-EngB-Septin-like GTPase superfamily. EngA (Der) GTPase family. In terms of assembly, associates with the 50S ribosomal subunit.

GTPase that plays an essential role in the late steps of ribosome biogenesis. In Erwinia tasmaniensis (strain DSM 17950 / CFBP 7177 / CIP 109463 / NCPPB 4357 / Et1/99), this protein is GTPase Der.